Reading from the N-terminus, the 290-residue chain is tRNA dimethylallyltransferase (290 aa).

Position 11–18 (11–18 (GPTASGKS)) interacts with ATP. Substrate is bound at residue 13–18 (TASGKS). Interaction with substrate tRNA stretches follow at residues 36–39 (DSMQ) and 158–162 (QRIVR).

The protein belongs to the IPP transferase family. As to quaternary structure, monomer. Requires Mg(2+) as cofactor.

It catalyses the reaction adenosine(37) in tRNA + dimethylallyl diphosphate = N(6)-dimethylallyladenosine(37) in tRNA + diphosphate. Its function is as follows. Catalyzes the transfer of a dimethylallyl group onto the adenine at position 37 in tRNAs that read codons beginning with uridine, leading to the formation of N6-(dimethylallyl)adenosine (i(6)A). This Bartonella tribocorum (strain CIP 105476 / IBS 506) protein is tRNA dimethylallyltransferase.